Reading from the N-terminus, the 236-residue chain is 5'-methylthioadenosine/S-adenosylhomocysteine nucleosidase (236 aa).

E12 serves as the catalytic Proton acceptor. Substrate is bound by residues G78, I153, and 174–175 (ME). The active-site Proton donor is D198.

Belongs to the PNP/UDP phosphorylase family. MtnN subfamily.

The enzyme catalyses S-adenosyl-L-homocysteine + H2O = S-(5-deoxy-D-ribos-5-yl)-L-homocysteine + adenine. The catalysed reaction is S-methyl-5'-thioadenosine + H2O = 5-(methylsulfanyl)-D-ribose + adenine. It carries out the reaction 5'-deoxyadenosine + H2O = 5-deoxy-D-ribose + adenine. The protein operates within amino-acid biosynthesis; L-methionine biosynthesis via salvage pathway; S-methyl-5-thio-alpha-D-ribose 1-phosphate from S-methyl-5'-thioadenosine (hydrolase route): step 1/2. In terms of biological role, catalyzes the irreversible cleavage of the glycosidic bond in both 5'-methylthioadenosine (MTA) and S-adenosylhomocysteine (SAH/AdoHcy) to adenine and the corresponding thioribose, 5'-methylthioribose and S-ribosylhomocysteine, respectively. Also cleaves 5'-deoxyadenosine, a toxic by-product of radical S-adenosylmethionine (SAM) enzymes, into 5-deoxyribose and adenine. This is 5'-methylthioadenosine/S-adenosylhomocysteine nucleosidase from Shewanella oneidensis (strain ATCC 700550 / JCM 31522 / CIP 106686 / LMG 19005 / NCIMB 14063 / MR-1).